Here is a 458-residue protein sequence, read N- to C-terminus: Argininosuccinate lyase (458 aa).

This sequence belongs to the lyase 1 family. Argininosuccinate lyase subfamily.

Its subcellular location is the cytoplasm. It carries out the reaction 2-(N(omega)-L-arginino)succinate = fumarate + L-arginine. It functions in the pathway amino-acid biosynthesis; L-arginine biosynthesis; L-arginine from L-ornithine and carbamoyl phosphate: step 3/3. This Neisseria gonorrhoeae (strain ATCC 700825 / FA 1090) protein is Argininosuccinate lyase.